Here is a 142-residue protein sequence, read N- to C-terminus: Hemoglobin subunit alpha (142 aa).

Positions 1–142 constitute a Globin domain; sequence VLSAADKNNV…VSTVLTSKYR (142 aa). The residue at position 3 (serine 3) is a Phosphoserine. An N6-succinyllysine mark is found at lysine 7 and lysine 11. Lysine 16 is modified (N6-acetyllysine; alternate). N6-succinyllysine; alternate is present on lysine 16. The residue at position 24 (tyrosine 24) is a Phosphotyrosine. Position 35 is a phosphoserine (serine 35). Lysine 40 bears the N6-succinyllysine mark. Histidine 58 contacts O2. A heme b-binding site is contributed by histidine 87. The residue at position 102 (serine 102) is a Phosphoserine. A Phosphothreonine modification is found at threonine 108. Serine 125 bears the Phosphoserine mark. Phosphothreonine occurs at positions 135 and 138. A Phosphoserine modification is found at serine 139.

It belongs to the globin family. Heterotetramer of two alpha chains and two beta chains. As to expression, red blood cells.

Functionally, involved in oxygen transport from the lung to the various peripheral tissues. Hemopressin acts as an antagonist peptide of the cannabinoid receptor CNR1. Hemopressin-binding efficiently blocks cannabinoid receptor CNR1 and subsequent signaling. This Procavia capensis habessinica (Abyssinian hyrax) protein is Hemoglobin subunit alpha (HBA).